The primary structure comprises 874 residues: Leucine--tRNA ligase (874 aa).

Residues 47–57 (PYPSGKLHMGH) carry the 'HIGH' region motif. Positions 636–640 (KMSKS) match the 'KMSKS' region motif. Lys639 lines the ATP pocket.

This sequence belongs to the class-I aminoacyl-tRNA synthetase family.

It is found in the cytoplasm. It carries out the reaction tRNA(Leu) + L-leucine + ATP = L-leucyl-tRNA(Leu) + AMP + diphosphate. In Acinetobacter baumannii (strain SDF), this protein is Leucine--tRNA ligase.